The following is a 293-amino-acid chain: MKKKLILGLVMMMALFSLAACGGGGDVVKTDSGDVTQDELYDAMKDKYGSEFVQQLTFEKILGDKYKVSDEDVDKKFNEYKSQYGDQFSAVLAQSGLTEKSFKSQLKYNLLVQKATEANTDTSDKTLKKYYETWQPDITVSHILVADENKAKEVEQKLKDGAKFADLAKEYSTDTATKDNGGQLAPFGPGKMDPAFEKAAYALKNKGDISAPVKTQYGYHIIQMDKPATKTTFEKDKKAVKASYLESQLTTENMQKTLKKEYKDANVKVEDKDLKDAFKDFDGSSSSDSDSSK.

The signal sequence occupies residues 1–20 (MKKKLILGLVMMMALFSLAA). Cysteine 21 is lipidated: N-palmitoyl cysteine. Cysteine 21 carries S-diacylglycerol cysteine lipidation. Residues 135–226 (QPDITVSHIL…YGYHIIQMDK (92 aa)) enclose the PpiC domain.

This sequence belongs to the PrsA family.

Its subcellular location is the cell membrane. The catalysed reaction is [protein]-peptidylproline (omega=180) = [protein]-peptidylproline (omega=0). Its function is as follows. Plays a major role in protein secretion by helping the post-translocational extracellular folding of several secreted proteins. The sequence is that of Foldase protein PrsA 2 from Listeria monocytogenes serotype 4b (strain F2365).